The chain runs to 438 residues: Trigger factor (438 aa).

The 72-residue stretch at 160 to 231 (SDQVTIEEQG…IMDVKTKQLQ (72 aa)) folds into the PPIase FKBP-type domain. Residues 407-438 (AQLSGPQAETVAADQGEQQAEGQEESAEKSEE) form a disordered region. Positions 418–427 (AADQGEQQAE) are enriched in low complexity.

It belongs to the FKBP-type PPIase family. Tig subfamily.

It is found in the cytoplasm. It carries out the reaction [protein]-peptidylproline (omega=180) = [protein]-peptidylproline (omega=0). In terms of biological role, involved in protein export. Acts as a chaperone by maintaining the newly synthesized protein in an open conformation. Functions as a peptidyl-prolyl cis-trans isomerase. The sequence is that of Trigger factor from Deinococcus deserti (strain DSM 17065 / CIP 109153 / LMG 22923 / VCD115).